The chain runs to 422 residues: F-box/WD repeat-containing protein 2 (422 aa).

In terms of domain architecture, F-box spans 54 to 101; sequence RDFLKLLPLELSFYLLKWLDPQTLLTCCLVSKQWNKVISACTEVWQTA. WD repeat units lie at residues 146 to 183, 185 to 221, 224 to 265, and 276 to 314; these read GHSA…CVYG, QTHT…RTQH, GHTG…NTLT, and LQKC…NCKC. Lysine 298 carries the N6-acetyllysine modification.

Directly interacts with SKP1 and CUL1. As to expression, widely expressed during embryogenesis and in adult tissues.

In terms of biological role, substrate-recognition component of the SCF (SKP1-CUL1-F-box protein)-type E3 ubiquitin ligase complex. This chain is F-box/WD repeat-containing protein 2 (Fbxw2), found in Mus musculus (Mouse).